The sequence spans 62 residues: Large ribosomal subunit protein bL28 (62 aa).

This sequence belongs to the bacterial ribosomal protein bL28 family.

This is Large ribosomal subunit protein bL28 from Helicobacter acinonychis (strain Sheeba).